The chain runs to 143 residues: MFMGEYQHNLDAKGRLIIPAKLREQIGPAMVLTRGMEGCIFGYPLTEWAKIEAKLAKLPLTKKNARSFTRMFYSGAMEGEFDKQGRINLSPTLKKHAGLVKECVIVGVSNRIEIWAKERWEEYSDEANESYDEIAEDLDDIEL.

2 consecutive SpoVT-AbrB domains span residues 5-47 and 76-119; these read EYQH…PLTE and AMEG…AKER.

Belongs to the MraZ family. Forms oligomers.

The protein resides in the cytoplasm. The protein localises to the nucleoid. The chain is Transcriptional regulator MraZ from Lactobacillus delbrueckii subsp. bulgaricus (strain ATCC 11842 / DSM 20081 / BCRC 10696 / JCM 1002 / NBRC 13953 / NCIMB 11778 / NCTC 12712 / WDCM 00102 / Lb 14).